Reading from the N-terminus, the 183-residue chain is Glutathione-regulated potassium-efflux system ancillary protein KefG (183 aa).

This sequence belongs to the NAD(P)H dehydrogenase (quinone) family. KefG subfamily. Interacts with KefB.

It localises to the cell inner membrane. The enzyme catalyses a quinone + NADH + H(+) = a quinol + NAD(+). It catalyses the reaction a quinone + NADPH + H(+) = a quinol + NADP(+). Regulatory subunit of a potassium efflux system that confers protection against electrophiles. Required for full activity of KefB. The protein is Glutathione-regulated potassium-efflux system ancillary protein KefG of Pectobacterium atrosepticum (strain SCRI 1043 / ATCC BAA-672) (Erwinia carotovora subsp. atroseptica).